The primary structure comprises 399 residues: P2X purinoceptor 1 (399 aa).

At 1–28 the chain is on the cytoplasmic side; that stretch reads MARRLQDELSAFFFEYDTPRMVLVRNKK. The chain crosses the membrane as a helical span at residues 29 to 50; that stretch reads VGVIFRLIQLVVLVYVIGWVFV. Residues 51–338 lie on the Extracellular side of the membrane; sequence YEKGYQTSSG…IPTMTTIGSG (288 aa). CTP-binding residues include lysine 68, lysine 70, and lysine 140. An ATP-binding site is contributed by lysine 70. Disulfide bonds link cysteine 117-cysteine 165, cysteine 126-cysteine 149, and cysteine 132-cysteine 159. Asparagine 153 and asparagine 184 each carry an N-linked (GlcNAc...) asparagine glycan. Threonine 186 is a binding site for CTP. Position 186 (threonine 186) interacts with ATP. Asparagine 210 carries N-linked (GlcNAc...) asparagine glycosylation. 2 cysteine pairs are disulfide-bonded: cysteine 217–cysteine 227 and cysteine 261–cysteine 270. ATP-binding residues include serine 286, asparagine 290, and arginine 292. The CTP site is built by asparagine 290 and arginine 292. A glycan (N-linked (GlcNAc...) asparagine) is linked at asparagine 300. Position 309 (lysine 309) interacts with CTP. Residue lysine 309 participates in ATP binding. Positions 331 to 338 are pore-forming motif; sequence TMTTIGSG. The chain crosses the membrane as a helical span at residues 339 to 358; that stretch reads IGIFGVATVLCDLLLLHILP. Topologically, residues 359 to 399 are cytoplasmic; the sequence is KRHYYKQKKFKYAEDMGPGEGERDPAATSSTLGLQENMRTS. A disordered region spans residues 374 to 399; that stretch reads MGPGEGERDPAATSSTLGLQENMRTS. Residues 385–399 show a composition bias toward polar residues; sequence ATSSTLGLQENMRTS. A phosphoserine mark is found at serine 387 and serine 388. Threonine 389 is subject to Phosphothreonine.

It belongs to the P2X receptor family. Functional P2XRs are organized as homomeric and heteromeric trimers. Forms heterodimer with P2RX2. Forms heterodimer with P2RX4. Forms heterodimer with P2RX5. In terms of tissue distribution, expressed in smooth muscle of the bladder and arteries.

It localises to the cell membrane. The catalysed reaction is Ca(2+)(in) = Ca(2+)(out). It carries out the reaction K(+)(in) = K(+)(out). The enzyme catalyses Na(+)(in) = Na(+)(out). With respect to regulation, activated by low concentrations of ATP (&lt;1 uM). Undergoes rapid desensitisation. Sensitives to the ATP agonist:alpha/beta-methylene-ATP. Modulated by cholesterol. Its function is as follows. ATP-gated nonselective transmembrane cation channel permeable to potassium, sodium and with relatively high calcium permeability. Furthermore, CTP functions as a weak affinity agonist for P2RX1. Plays a role in male fertility, bladder contraction and platelet aggregation. Specifically, plays an important role in neurogenic contraction of smooth muscle of the vas deferens, and therefore is essential for normal male reproductive function. In addition, contributes to smooth muscle contractions of the urinary bladder. On platelets, contributes to platelet activation and aggregation and thereby, also to thrombosis. On neutrophils, it is involved in chemotaxis and in mitigating the activation of circulating cells. The protein is P2X purinoceptor 1 (P2rx1) of Mus musculus (Mouse).